Here is a 746-residue protein sequence, read N- to C-terminus: Polyribonucleotide nucleotidyltransferase (746 aa).

The Mg(2+) site is built by Asp519 and Asp525. Residues 585 to 644 (PRVIAVKIPVDKIGEVIGPKGKMINQIQEDTGADISIEDDGTVYIGATNGPSADAARSAI) enclose the KH domain. The S1 motif domain occupies 656 to 728 (GERYLGTVVK…DRGKLSLSPV (73 aa)).

The protein belongs to the polyribonucleotide nucleotidyltransferase family. Mg(2+) serves as cofactor.

The protein resides in the cytoplasm. The enzyme catalyses RNA(n+1) + phosphate = RNA(n) + a ribonucleoside 5'-diphosphate. Its function is as follows. Involved in mRNA degradation. Catalyzes the phosphorolysis of single-stranded polyribonucleotides processively in the 3'- to 5'-direction. This chain is Polyribonucleotide nucleotidyltransferase, found in Arthrobacter sp. (strain FB24).